Reading from the N-terminus, the 84-residue chain is Large ribosomal subunit protein bL27 (84 aa).

It belongs to the bacterial ribosomal protein bL27 family.

The chain is Large ribosomal subunit protein bL27 from Buchnera aphidicola subsp. Schizaphis graminum (strain Sg).